A 148-amino-acid polypeptide reads, in one-letter code: Glutaredoxin-C10 (148 aa).

The disordered stretch occupies residues 16 to 55; that stretch reads TLDLTVHPPPPPPLPPPAPSTVSSSTASTSLSFDEEETSE. Residues 22–34 are compositionally biased toward pro residues; sequence HPPPPPPLPPPAP. Positions 35 to 47 are enriched in low complexity; it reads STVSSSTASTSLS. Residues 55–147 enclose the Glutaredoxin domain; it reads ESKIGRLISE…PRLVEVGALW (93 aa). C76 and C79 are joined by a disulfide.

This sequence belongs to the glutaredoxin family. CC-type subfamily.

The protein localises to the cytoplasm. Has a glutathione-disulfide oxidoreductase activity in the presence of NADPH and glutathione reductase. Reduces low molecular weight disulfides and proteins. The chain is Glutaredoxin-C10 (GRXC10) from Arabidopsis thaliana (Mouse-ear cress).